An 89-amino-acid polypeptide reads, in one-letter code: Small ribosomal subunit protein uS15 (89 aa).

This sequence belongs to the universal ribosomal protein uS15 family. In terms of assembly, part of the 30S ribosomal subunit. Forms a bridge to the 50S subunit in the 70S ribosome, contacting the 23S rRNA.

One of the primary rRNA binding proteins, it binds directly to 16S rRNA where it helps nucleate assembly of the platform of the 30S subunit by binding and bridging several RNA helices of the 16S rRNA. In terms of biological role, forms an intersubunit bridge (bridge B4) with the 23S rRNA of the 50S subunit in the ribosome. This is Small ribosomal subunit protein uS15 from Klebsiella pneumoniae (strain 342).